Here is a 710-residue protein sequence, read N- to C-terminus: Interferon-induced GTP-binding protein Mx2 (710 aa).

A disordered region spans residues 1–51 (MSMSFRPLKYKRHTQTSTQHHPKQDIYFHQQPPGPPLGQTMSPPQWQVEES). Over residues 39–50 (QTMSPPQWQVEE) the composition is skewed to polar residues. Residues 112–383 (DLALPAIAVI…LIWHINKSLP (272 aa)) form the Dynamin-type G domain. A G1 motif region spans residues 122-129 (GDQSSGKS). 122–129 (GDQSSGKS) serves as a coordination point for GTP. The G2 motif stretch occupies residues 147 to 149 (ITR). Residues 221-224 (DLPG) form a G3 motif region. GTP is bound by residues 221–225 (DLPGI) and 290–293 (TKPD). The interval 290–293 (TKPD) is G4 motif. A G5 motif region spans residues 322-325 (KCRG). Positions 619–710 (IVEIGVHLNA…ALYEFPHFKG (92 aa)) constitute a GED domain.

This sequence belongs to the TRAFAC class dynamin-like GTPase superfamily. Dynamin/Fzo/YdjA family.

The protein resides in the cytoplasm. Its subcellular location is the nucleus. Functionally, interferon-induced dynamin-like GTPase with antiviral activity against vesicular stomatitis virus (VSV). This is Interferon-induced GTP-binding protein Mx2 (MX2) from Bos taurus (Bovine).